We begin with the raw amino-acid sequence, 156 residues long: Endogenous retrovirus group K member 113 Pro protein (156 aa).

The region spanning 21-96 (FEGLVDTGAD…IPLNLWGRDL (76 aa)) is the Peptidase A2 domain. Residue Asp26 is part of the active site. Residues 111-156 (YSPTSQKIMTKMGYIPGKGLGKNEDGIKIPVEAKINQKREGIGYPF) enclose the G-patch domain.

The protein belongs to the peptidase A2 family. HERV class-II K(HML-2) subfamily. Active as a homodimer. Autoproteolytically processed at the N-terminus. Expected C-terminal autoprocessing not detected. The sequence shown is that of the processed Pro protein.

It carries out the reaction Processing at the authentic HIV-1 PR recognition site and release of the mature p17 matrix and the p24 capsid protein, as a result of the cleavage of the -SQNY-|-PIVQ- cleavage site.. Retroviral proteases have roles in the processing of the primary translation products and the maturation of the viral particle. Endogenous Pro proteins may have kept, lost or modified their original function during evolution. The polypeptide is Endogenous retrovirus group K member 113 Pro protein (HERVK_113) (Homo sapiens (Human)).